Reading from the N-terminus, the 99-residue chain is Sec-independent protein translocase protein TatA (99 aa).

Residues 1 to 21 (MIGNLKPLEIVLIIAVILLLF) form a helical membrane-spanning segment. Residues 46 to 99 (AMKKDDAATAAPTTETVADDTVPPQSTTARTIQAAPGDVTSSRPVSEAKPTTQS) form a disordered region. The span at 53 to 69 (ATAAPTTETVADDTVPP) shows a compositional bias: low complexity. Residues 84-99 (VTSSRPVSEAKPTTQS) are compositionally biased toward polar residues.

This sequence belongs to the TatA/E family. The Tat system comprises two distinct complexes: a TatABC complex, containing multiple copies of TatA, TatB and TatC subunits, and a separate TatA complex, containing only TatA subunits. Substrates initially bind to the TatABC complex, which probably triggers association of the separate TatA complex to form the active translocon.

It is found in the cell membrane. Functionally, part of the twin-arginine translocation (Tat) system that transports large folded proteins containing a characteristic twin-arginine motif in their signal peptide across membranes. TatA could form the protein-conducting channel of the Tat system. The protein is Sec-independent protein translocase protein TatA of Streptomyces griseus subsp. griseus (strain JCM 4626 / CBS 651.72 / NBRC 13350 / KCC S-0626 / ISP 5235).